Here is a 464-residue protein sequence, read N- to C-terminus: 3-deoxy-D-manno-octulosonic acid transferase (464 aa).

The helical; Signal-anchor transmembrane segment at 2–22 threads the bilayer; that stretch reads MLLYYALSFILLPIYFIIILI. The region spanning 47-93 is the RPE1 insert domain; the sequence is YSLDFLHNEANKERFKGDTERRTAAYTSVREDSSTGSTSKLPLEASY. The active-site Proton acceptor is the glutamate 107. Residues 311–312, 352–354, and 377–380 each bind CMP; these read PR, FGE, and NILE.

Belongs to the glycosyltransferase group 1 family.

The protein resides in the cell inner membrane. It catalyses the reaction lipid IVA (E. coli) + CMP-3-deoxy-beta-D-manno-octulosonate = alpha-Kdo-(2-&gt;6)-lipid IVA (E. coli) + CMP + H(+). Its pathway is bacterial outer membrane biogenesis; LPS core biosynthesis. Involved in lipopolysaccharide (LPS) biosynthesis. Catalyzes the transfer of 3-deoxy-D-manno-octulosonate (Kdo) residue(s) from CMP-Kdo to lipid IV(A), the tetraacyldisaccharide-1,4'-bisphosphate precursor of lipid A. This Rickettsia felis (strain ATCC VR-1525 / URRWXCal2) (Rickettsia azadi) protein is 3-deoxy-D-manno-octulosonic acid transferase (waaA).